Consider the following 102-residue polypeptide: UPF0473 protein SERP1179 (102 aa).

Belongs to the UPF0473 family.

The polypeptide is UPF0473 protein SERP1179 (Staphylococcus epidermidis (strain ATCC 35984 / DSM 28319 / BCRC 17069 / CCUG 31568 / BM 3577 / RP62A)).